The sequence spans 108 residues: MPKLGILKSKSMFCVIYRSSKRDQTYLYVEKKDDFSRVPEELMKGFGQPQLAMILPLDGRKKLVNADIEKVKQALTEQGYYLQLPPSPEDLLKQHLSVMGQKTDDTNK.

The YcgL domain occupies 12-96; that stretch reads MFCVIYRSSK…SPEDLLKQHL (85 aa).

The protein is Protein YcgL of Shigella dysenteriae serotype 1 (strain Sd197).